We begin with the raw amino-acid sequence, 224 residues long: Uridylate kinase (224 aa).

Position 9-10 (9-10 (GS)) interacts with ATP. Gly43 is a binding site for UMP. Residues Gly44 and Arg48 each contribute to the ATP site. UMP is bound by residues Asp65 and 113–119 (VVPGQTT). The ATP site is built by Thr139, Phe145, and Asp148.

Belongs to the UMP kinase family. In terms of assembly, homohexamer.

The protein localises to the cytoplasm. It carries out the reaction UMP + ATP = UDP + ADP. The protein operates within pyrimidine metabolism; CTP biosynthesis via de novo pathway; UDP from UMP (UMPK route): step 1/1. Its activity is regulated as follows. Inhibited by UTP. Catalyzes the reversible phosphorylation of UMP to UDP. The protein is Uridylate kinase of Methanocella arvoryzae (strain DSM 22066 / NBRC 105507 / MRE50).